The chain runs to 233 residues: DNA-directed RNA polymerase V subunit 5C (233 aa).

The protein belongs to the archaeal Rpo5/eukaryotic RPB5 RNA polymerase subunit family. Component of the RNA polymerase V complex. Expressed in flower buds and siliques.

Its subcellular location is the nucleus. Its function is as follows. DNA-dependent RNA polymerase catalyzes the transcription of DNA into RNA using the four ribonucleoside triphosphates as substrates. Component of RNA polymerase V involved in RNA-directed DNA methylation-dependent (RdDM) silencing of endogenous repeated sequences, including transposable elements. The chain is DNA-directed RNA polymerase V subunit 5C (NRPE5C) from Arabidopsis thaliana (Mouse-ear cress).